A 312-amino-acid chain; its full sequence is tRNA uridine(34) hydroxylase (312 aa).

The Rhodanese domain maps to 145–235 (ENKNSVLVDM…GIIKYVRDAR (91 aa)). Residue C199 is the Cysteine persulfide intermediate of the active site.

The protein belongs to the TrhO family.

The catalysed reaction is uridine(34) in tRNA + AH2 + O2 = 5-hydroxyuridine(34) in tRNA + A + H2O. In terms of biological role, catalyzes oxygen-dependent 5-hydroxyuridine (ho5U) modification at position 34 in tRNAs. The sequence is that of tRNA uridine(34) hydroxylase from Buchnera aphidicola subsp. Baizongia pistaciae (strain Bp).